The following is a 61-amino-acid chain: Short neurotoxin 2 (61 aa).

Disulfide bonds link C3–C23, C17–C40, C42–C53, and C54–C59.

Belongs to the three-finger toxin family. Short-chain subfamily. Type I alpha-neurotoxin sub-subfamily. In terms of tissue distribution, expressed by the venom gland.

The protein resides in the secreted. Its function is as follows. Binds to muscle nicotinic acetylcholine receptor (nAChR) and inhibit acetylcholine from binding to the receptor, thereby impairing neuromuscular transmission. The chain is Short neurotoxin 2 from Hemachatus haemachatus (Rinkhals).